The sequence spans 506 residues: Glutamate--tRNA ligase (506 aa).

The 'HIGH' region motif lies at 23 to 33 (PSPTGTPHVGL). Residues 267–271 (KLSKR) carry the 'KMSKS' region motif. Lysine 270 contributes to the ATP binding site.

Belongs to the class-I aminoacyl-tRNA synthetase family. Glutamate--tRNA ligase type 1 subfamily. Monomer.

The protein resides in the cytoplasm. It catalyses the reaction tRNA(Glu) + L-glutamate + ATP = L-glutamyl-tRNA(Glu) + AMP + diphosphate. In terms of biological role, catalyzes the attachment of glutamate to tRNA(Glu) in a two-step reaction: glutamate is first activated by ATP to form Glu-AMP and then transferred to the acceptor end of tRNA(Glu). The protein is Glutamate--tRNA ligase of Clavibacter michiganensis subsp. michiganensis (strain NCPPB 382).